The sequence spans 153 residues: Ribosome maturation factor RimP (153 aa).

This sequence belongs to the RimP family.

It is found in the cytoplasm. Required for maturation of 30S ribosomal subunits. This is Ribosome maturation factor RimP from Burkholderia mallei (strain NCTC 10229).